A 198-amino-acid chain; its full sequence is Probable GTP-binding protein EngB (198 aa).

The EngB-type G domain occupies 22–195 (DLPEIALAGR…WKAIHKFTKT (174 aa)). GTP is bound by residues 30-37 (GRSNVGKS), 57-61 (GKTQT), 75-78 (DVPG), 142-145 (TKAD), and 174-176 (FSS). The Mg(2+) site is built by serine 37 and threonine 59.

The protein belongs to the TRAFAC class TrmE-Era-EngA-EngB-Septin-like GTPase superfamily. EngB GTPase family. The cofactor is Mg(2+).

Its function is as follows. Necessary for normal cell division and for the maintenance of normal septation. The chain is Probable GTP-binding protein EngB from Bacillus cereus (strain B4264).